The chain runs to 194 residues: ATP-dependent Clp protease proteolytic subunit 3 (194 aa).

The active-site Nucleophile is Ser-96. His-121 is an active-site residue.

This sequence belongs to the peptidase S14 family. In terms of assembly, fourteen ClpP subunits assemble into 2 heptameric rings which stack back to back to give a disk-like structure with a central cavity, resembling the structure of eukaryotic proteasomes.

The protein resides in the cytoplasm. The enzyme catalyses Hydrolysis of proteins to small peptides in the presence of ATP and magnesium. alpha-casein is the usual test substrate. In the absence of ATP, only oligopeptides shorter than five residues are hydrolyzed (such as succinyl-Leu-Tyr-|-NHMec, and Leu-Tyr-Leu-|-Tyr-Trp, in which cleavage of the -Tyr-|-Leu- and -Tyr-|-Trp bonds also occurs).. In terms of biological role, cleaves peptides in various proteins in a process that requires ATP hydrolysis. Has a chymotrypsin-like activity. Plays a major role in the degradation of misfolded proteins. This Rhizobium johnstonii (strain DSM 114642 / LMG 32736 / 3841) (Rhizobium leguminosarum bv. viciae) protein is ATP-dependent Clp protease proteolytic subunit 3.